A 48-amino-acid polypeptide reads, in one-letter code: M-oxotoxin-Ot1a (48 aa).

As to expression, expressed by the venom gland.

The protein resides in the secreted. The protein localises to the target cell membrane. Functionally, disrupts cell membranes, particularly those rich in phosphocholine, through formation of pores. Has antimicrobial activity against Gram-negative bacterium E.coli, Gram-positive bacteria B.subtilis and S.aureus, and hemolytic activity against sheep, pig and guinea pig erythrocytes. Has insecticidal activity against S.frugiperda ovarian cells by opening non-selective ion channels. Enhances the insecticidal activity of spider venom neurotoxic peptides. The sequence is that of M-oxotoxin-Ot1a from Oxyopes takobius (Lynx spider).